The sequence spans 405 residues: Phosphopentomutase (405 aa).

6 residues coordinate Mn(2+): Asp-10, Asp-297, His-302, Asp-338, His-339, and His-350.

Belongs to the phosphopentomutase family. It depends on Mn(2+) as a cofactor.

The protein resides in the cytoplasm. The catalysed reaction is 2-deoxy-alpha-D-ribose 1-phosphate = 2-deoxy-D-ribose 5-phosphate. The enzyme catalyses alpha-D-ribose 1-phosphate = D-ribose 5-phosphate. Its pathway is carbohydrate degradation; 2-deoxy-D-ribose 1-phosphate degradation; D-glyceraldehyde 3-phosphate and acetaldehyde from 2-deoxy-alpha-D-ribose 1-phosphate: step 1/2. Its function is as follows. Isomerase that catalyzes the conversion of deoxy-ribose 1-phosphate (dRib-1-P) and ribose 1-phosphate (Rib-1-P) to deoxy-ribose 5-phosphate (dRib-5-P) and ribose 5-phosphate (Rib-5-P), respectively. The protein is Phosphopentomutase of Pseudoalteromonas translucida (strain TAC 125).